A 573-amino-acid polypeptide reads, in one-letter code: Urease subunit alpha (573 aa).

The 438-residue stretch at 136 to 573 folds into the Urease domain; it reads GAIDCHVHLI…LPMAQRYFLF (438 aa). Residues histidine 141, histidine 143, and lysine 224 each coordinate Ni(2+). Lysine 224 is subject to N6-carboxylysine. Residue histidine 226 coordinates substrate. Residues histidine 253 and histidine 279 each coordinate Ni(2+). Histidine 327 functions as the Proton donor in the catalytic mechanism. Ni(2+) is bound at residue aspartate 367.

Belongs to the metallo-dependent hydrolases superfamily. Urease alpha subunit family. Heterotrimer of UreA (gamma), UreB (beta) and UreC (alpha) subunits. Three heterotrimers associate to form the active enzyme. The cofactor is Ni cation. Post-translationally, carboxylation allows a single lysine to coordinate two nickel ions.

The protein resides in the cytoplasm. It carries out the reaction urea + 2 H2O + H(+) = hydrogencarbonate + 2 NH4(+). Its pathway is nitrogen metabolism; urea degradation; CO(2) and NH(3) from urea (urease route): step 1/1. This chain is Urease subunit alpha, found in Mycobacterium sp. (strain JLS).